Consider the following 321-residue polypeptide: MEPLATTLCPQECTQTTRNETPNETTWSSEHVTKYTYISISLVICSLGLVGNGLLIWFLIFCIKRKPFTIYILHLAFADFMVLLCSSIIQLVNTFHIYDSTLVSYAVLFMIFGYNTGLHLLTAISVERCLSVLYPIWYHCRRPKHQSTVACTLLWALSVLVSGLENFFCILEVKPQFPECRYVYIFSCTLTFLVFVPLMVFSNLILFIQVCCNLKPRQPAKLYVIIMATVILFLVFAMPMKVLLIIGYYSNSTDASVWKSLPYLNMLSTINCSINPIVYFVVGSLRRKRSRKSLKEALQKVFEEKPVVASRENEVQFSLPL.

The Extracellular portion of the chain corresponds to 1–35 (MEPLATTLCPQECTQTTRNETPNETTWSSEHVTKY). A glycan (N-linked (GlcNAc...) asparagine) is linked at N23. The chain crosses the membrane as a helical span at residues 36–56 (TYISISLVICSLGLVGNGLLI). At 57–71 (WFLIFCIKRKPFTIY) the chain is on the cytoplasmic side. A helical membrane pass occupies residues 72–92 (ILHLAFADFMVLLCSSIIQLV). The Extracellular portion of the chain corresponds to 93–102 (NTFHIYDSTL). Residues 103–126 (VSYAVLFMIFGYNTGLHLLTAISV) form a helical membrane-spanning segment. At 127–147 (ERCLSVLYPIWYHCRRPKHQS) the chain is on the cytoplasmic side. Residues 148–168 (TVACTLLWALSVLVSGLENFF) traverse the membrane as a helical segment. At 169 to 188 (CILEVKPQFPECRYVYIFSC) the chain is on the extracellular side. Residues 189-209 (TLTFLVFVPLMVFSNLILFIQ) traverse the membrane as a helical segment. At 210–225 (VCCNLKPRQPAKLYVI) the chain is on the cytoplasmic side. Residues 226–246 (IMATVILFLVFAMPMKVLLII) traverse the membrane as a helical segment. Residue G247 is a topological domain, extracellular. A helical transmembrane segment spans residues 248-271 (YYSNSTDASVWKSLPYLNMLSTIN). Residues 272–320 (CSINPIVYFVVGSLRRKRSRKSLKEALQKVFEEKPVVASRENEVQFSLP) lie on the Cytoplasmic side of the membrane.

This sequence belongs to the G-protein coupled receptor 1 family. Mas subfamily.

Its subcellular location is the cell membrane. Its function is as follows. Orphan receptor. May regulate nociceptor function and/or development, including the sensation or modulation of pain. The sequence is that of Mas-related G-protein coupled receptor member H (Mrgprh) from Rattus norvegicus (Rat).